A 528-amino-acid polypeptide reads, in one-letter code: Probable protein phosphatase 2C 51 (528 aa).

The helical transmembrane segment at 8–28 (SLLNLGLLIIFFVFFFLVINC) threads the bilayer. The PPM-type phosphatase domain occupies 71 to 445 (RCHTAAIQGR…DNMAAVVVPL (375 aa)). Positions 117, 118, 385, and 436 each coordinate Mn(2+).

Belongs to the PP2C family. Mg(2+) is required as a cofactor. The cofactor is Mn(2+).

The protein localises to the membrane. It carries out the reaction O-phospho-L-seryl-[protein] + H2O = L-seryl-[protein] + phosphate. The catalysed reaction is O-phospho-L-threonyl-[protein] + H2O = L-threonyl-[protein] + phosphate. This is Probable protein phosphatase 2C 51 from Arabidopsis thaliana (Mouse-ear cress).